The primary structure comprises 100 residues: Small ribosomal subunit protein uS14c (100 aa).

This sequence belongs to the universal ribosomal protein uS14 family. As to quaternary structure, part of the 30S ribosomal subunit.

Its subcellular location is the plastid. It localises to the chloroplast. Functionally, binds 16S rRNA, required for the assembly of 30S particles. The sequence is that of Small ribosomal subunit protein uS14c from Lactuca sativa (Garden lettuce).